Consider the following 21-residue polypeptide: Maculatin-1.1 (21 aa).

F21 is modified (phenylalanine amide).

In terms of tissue distribution, expressed by the skin dorsal glands.

The protein resides in the secreted. Functionally, maculatin-1.1 shows significant antibacterial activity against Gram-positive bacteria, less against Gram-negative bacteria. Maculatin-1.1.1 is inactive. In Ranoidea genimaculata (Brown-spotted tree frog), this protein is Maculatin-1.1.